The following is a 553-amino-acid chain: Mucolipin-3 (553 aa).

At 1 to 62 the chain is on the cytoplasmic side; the sequence is MADPEVVVSS…FWARGRKPWK (62 aa). The segment at 52-62 is interaction with phosphoinositides; it reads KFWARGRKPWK. A helical transmembrane segment spans residues 63 to 83; it reads LAIQILKIAMVTIQLVLFGLS. Topologically, residues 84–283 are extracellular; that stretch reads NQMVVAFKEE…VSGSIQKNTH (200 aa). An extracellular/lumenal pore loop region spans residues 104–118; that stretch reads KGYMDRMDDTYAVYT. N-linked (GlcNAc...) asparagine glycans are attached at residues Asn-138, Asn-172, and Asn-205. The cysteines at positions 159 and 185 are disulfide-linked. A disulfide bridge connects residues Cys-238 and Cys-269. The chain crosses the membrane as a helical span at residues 284-304; the sequence is YMMIFDAFVILTCLVSLILCI. At 305 to 341 the chain is on the cytoplasmic side; sequence RSVIRGLQLQQEFVNFFLLHYKKEVSVSDQMEFVNGW. The chain crosses the membrane as a helical span at residues 342-362; the sequence is YIMIIISDILTIIGSILKMEI. Over 363 to 371 the chain is Extracellular; the sequence is QAKSLTSYD. Residues 372-392 traverse the membrane as a helical segment; sequence VCSILLGTSTMLVWLGVIRYL. The Cytoplasmic portion of the chain corresponds to 393 to 414; the sequence is GFFAKYNLLILTLQAALPNVIR. A helical membrane pass occupies residues 415–435; that stretch reads FCCCAAMIYLGYCFCGWIVLG. At 436–443 the chain is on the extracellular side; the sequence is PYHDKFRS. An intramembrane region (pore-forming) is located at residues 444-464; it reads LNMVSECLFSLINGDDMFATF. Residues 456-459 carry the Selectivity filter motif; it reads NGDD. Over 465–475 the chain is Extracellular; that stretch reads AKMQQKSYLVW. A helical transmembrane segment spans residues 476 to 497; sequence LFSRIYLYSFISLFIYMILSLF. Over 498–553 the chain is Cytoplasmic; it reads IALITDTYETIKQYQQDGFPETELRTFISECKDLPNSGKYRLEDDPPVSLFCCCKK.

Belongs to the transient receptor (TC 1.A.4) family. Polycystin subfamily. MCOLN3 sub-subfamily. Homotetramer. Can heterooligomerize with MCOLN1; heteromeric assemblies have different channel properties as compared to the respective homooligomers and may be tissue-specific. May heterooligomerize with TRPV5 to form a functional distinct ion channel. Interacts with GABARAPL2. In terms of processing, N-glycosylated.

It is found in the cell membrane. Its subcellular location is the early endosome membrane. The protein localises to the late endosome membrane. The protein resides in the lysosome membrane. It localises to the cytoplasmic vesicle. It is found in the autophagosome membrane. It catalyses the reaction Ca(2+)(in) = Ca(2+)(out). The catalysed reaction is K(+)(in) = K(+)(out). It carries out the reaction Na(+)(in) = Na(+)(out). Its activity is regulated as follows. Channel activity is activated by PtdIns(3,5)P2 (phosphatidylinositol 3,5-bisphosphate). Inhibited by lumenal H(+) and Na(+). The channel pore shows dynamic behavior and undergoes spontaneous, Ca(2+)-dependent modulation when conducting Ca(2+). Functionally, nonselective cation channel probably playing a role in the regulation of membrane trafficking events. Acts as a Ca(2+)-permeable cation channel with inwardly rectifying activity. Mediates release of Ca(2+) from endosomes to the cytoplasm, contributes to endosomal acidification and is involved in the regulation of membrane trafficking and fusion in the endosomal pathway. Also permeable to Mg(2+), Na(+) and K(+). Does not seem to act as mechanosensory transduction channel in inner ear sensory hair cells. Proposed to play a critical role at the cochlear stereocilia ankle-link region during hair-bundle growth. Involved in the regulation of autophagy. Through association with GABARAPL2 may be involved in autophagosome formation possibly providing Ca(2+) for the fusion process. Through a possible and probably tissue-specific heteromerization with MCOLN1 may be at least in part involved in many lysosome-dependent cellular events. Possible heteromeric ion channel assemblies with TRPV5 show pharmacological similarity with TRPML3. The chain is Mucolipin-3 (MCOLN3) from Homo sapiens (Human).